The following is a 294-amino-acid chain: Probable enoyl-CoA hydratase 2 (294 aa).

Residues 84–85 (HG), lysine 113, 190–195 (DLNPLH), glycine 213, and phenylalanine 243 contribute to the (3R)-3-hydroxydecanoyl-CoA site. Residues 165–269 (DRAPDAISKQ…INPTTILFQS (105 aa)) form the MaoC-like domain. Positions 292–294 (GSL) match the Microbody targeting signal motif.

It belongs to the short-chain dehydrogenases/reductases (SDR) family.

Its subcellular location is the peroxisome. It catalyses the reaction a (3R)-3-hydroxyacyl-CoA = a (2E)-enoyl-CoA + H2O. The protein is Probable enoyl-CoA hydratase 2 (mfeB) of Dictyostelium discoideum (Social amoeba).